Consider the following 90-residue polypeptide: Large ribosomal subunit protein uL23c (90 aa).

This sequence belongs to the universal ribosomal protein uL23 family. Part of the 50S ribosomal subunit.

The protein localises to the plastid. It localises to the chloroplast. Functionally, binds to 23S rRNA. This chain is Large ribosomal subunit protein uL23c (rpl23), found in Oltmannsiellopsis viridis (Marine flagellate).